The following is a 111-amino-acid chain: DNA-directed RNA polymerase subunit Rpo11 (111 aa).

It belongs to the archaeal Rpo11/eukaryotic RPB11/RPC19 RNA polymerase subunit family. Part of the RNA polymerase complex.

It localises to the cytoplasm. The catalysed reaction is RNA(n) + a ribonucleoside 5'-triphosphate = RNA(n+1) + diphosphate. Its function is as follows. DNA-dependent RNA polymerase (RNAP) catalyzes the transcription of DNA into RNA using the four ribonucleoside triphosphates as substrates. This chain is DNA-directed RNA polymerase subunit Rpo11, found in Thermoplasma volcanium (strain ATCC 51530 / DSM 4299 / JCM 9571 / NBRC 15438 / GSS1).